The chain runs to 28 residues: leu operon leader peptide (28 aa).

Its function is as follows. Involved in control of the biosynthesis of leucine. This is leu operon leader peptide (leuL) from Salmonella typhi.